The chain runs to 913 residues: Ubiquitin carboxyl-terminal hydrolase 20 (913 aa).

Residues 6-111 (DLCPHLDSIG…GSSKFSEQDS (106 aa)) form a UBP-type zinc finger. Residues Cys8, His10, Cys30, Cys33, Cys43, Cys48, Cys53, His60, His64, His70, Cys83, and Cys86 each contribute to the Zn(2+) site. Phosphoserine occurs at positions 111, 131, and 133. The 541-residue stretch at 144–684 (TGMKNLGNSC…EGYVLFYRKS (541 aa)) folds into the USP domain. Residue Cys153 is the Nucleophile of the active site. The interval 256 to 414 (LTEARDSDSS…SSSPPRASPV (159 aa)) is disordered. Phosphothreonine is present on Thr257. Over residues 258–278 (EARDSDSSDTDEKREGDRSPS) the composition is skewed to basic and acidic residues. Position 304 is a phosphoserine (Ser304). The span at 315 to 331 (EASRAISEKERMKDRKF) shows a compositional bias: basic and acidic residues. Residue Ser367 is modified to Phosphoserine. Position 376 is a phosphothreonine (Thr376). A phosphoserine mark is found at Ser407 and Ser412. The Proton acceptor role is filled by His642. DUSP domains are found at residues 686-779 (EEAV…LYVC) and 788-891 (ALAK…RQSV).

It belongs to the peptidase C19 family. USP20/USP33 subfamily. As to quaternary structure, interacts with VHL, leading to its ubiquitination and subsequent degradation. Interacts with CCP110. Interacts with DIO2. Interacts with HIF1A. Interacts with ADRB2. Interacts with USP18. In terms of processing, ubiquitinated via a VHL-dependent pathway for proteasomal degradation.

The protein resides in the cytoplasm. It is found in the endoplasmic reticulum. The protein localises to the perinuclear region. Its subcellular location is the cytoskeleton. It localises to the microtubule organizing center. The protein resides in the centrosome. It carries out the reaction Thiol-dependent hydrolysis of ester, thioester, amide, peptide and isopeptide bonds formed by the C-terminal Gly of ubiquitin (a 76-residue protein attached to proteins as an intracellular targeting signal).. In terms of biological role, deubiquitinating enzyme that plays a role in many cellular processes including autophagy, cellular antiviral response or membrane protein biogenesis. Attenuates TLR4-mediated NF-kappa-B signaling by cooperating with beta-arrestin-2/ARRB2 and inhibiting TRAF6 autoubiquitination. Promotes cellular antiviral responses by deconjugating 'Lys-33' and 'Lys-48'-linked ubiquitination of STING1 leading to its stabilization. Plays an essential role in autophagy induction by regulating the ULK1 stability through deubiquitination of ULK1. Acts as a positive regulator for NF-kappa-B activation by TNF-alpha through deubiquitinating 'Lys-48'-linked polyubiquitination of SQSTM1, leading to its increased stability. Acts as a regulator of G-protein coupled receptor (GPCR) signaling by mediating the deubiquitination beta-2 adrenergic receptor (ADRB2). Plays a central role in ADRB2 recycling and resensitization after prolonged agonist stimulation by constitutively binding ADRB2, mediating deubiquitination of ADRB2 and inhibiting lysosomal trafficking of ADRB2. Upon dissociation, it is probably transferred to the translocated beta-arrestins, possibly leading to beta-arrestins deubiquitination and disengagement from ADRB2. This suggests the existence of a dynamic exchange between the ADRB2 and beta-arrestins. Deubiquitinates DIO2, thereby regulating thyroid hormone regulation. Deubiquitinates HIF1A, leading to stabilize HIF1A and enhance HIF1A-mediated activity. Deubiquitinates MCL1, a pivotal member of the anti-apoptotic Bcl-2 protein family to regulate its stability. Within the endoplasmic reticulum, participates with USP33 in the rescue of post-translationally targeted membrane proteins that are inappropriately ubiquitinated by the cytosolic protein quality control in the cytosol. The protein is Ubiquitin carboxyl-terminal hydrolase 20 (USP20) of Pongo abelii (Sumatran orangutan).